Reading from the N-terminus, the 289-residue chain is Early E4 34 kDa protein (289 aa).

The protein belongs to the adenoviridae E4 30 to 34 kDa protein family. Interacts with E1B-55k.

The protein localises to the host nucleus. It localises to the host cytoplasm. In terms of biological role, plays a major role to prevent cellular inhibition of viral genome replication by nuclear bodies. Assembles an SCF-like E3 ubiquitin ligase complex based on the cellular proteins ELOB, ELOC, CUL5 and RBX1, in cooperation with viral E1B-55K. This viral RING-type ligase ubiquitinates cellular substrates prior to proteasomal degradation: p53/TP53, LIG4, MRE11-RAD50-NBS1 (MRN) complex, ITGA3, DAXX and BLM. In Human adenovirus F serotype 40 (HAdV-40), this protein is Early E4 34 kDa protein.